The primary structure comprises 326 residues: HTH-type transcriptional regulator BlaA (326 aa).

Residues 1-59 form the HTH lysR-type domain; that stretch reads MDVVNACRAFVKVSERGSFTVGAAAAQMSQSVASRRVAALEKHFGERLFDRASRRPSLT. Residues 19-38 constitute a DNA-binding region (H-T-H motif); the sequence is FTVGAAAAQMSQSVASRRVA. The interval 289–326 is disordered; it reads TADHGPDPATGAGPGADAGTEPGARAEPGAPEEGAQAC. The segment covering 295–326 has biased composition (low complexity); the sequence is DPATGAGPGADAGTEPGARAEPGAPEEGAQAC.

This sequence belongs to the LysR transcriptional regulatory family.

Functionally, positive regulator of the expression of the gene (blaB) for beta-lactamase. It binds to the blaL-blaA intercistronic region. The chain is HTH-type transcriptional regulator BlaA (blaA) from Streptomyces cacaoi.